The chain runs to 1667 residues: Myomesin-1 (1667 aa).

A phosphoserine mark is found at serine 124 and serine 142. Residues 192 to 210 show a composition bias toward low complexity; the sequence is SKQSTASKQSATSKRTTST. The segment at 192–217 is disordered; it reads SKQSTASKQSATSKRTTSTLQREETF. 2 consecutive Ig-like C2-type domains span residues 258–349 and 376–478; these read PEFI…ASVV and PYGY…AYVF. Fibronectin type-III domains lie at 492-587, 620-714, and 721-814; these read APLD…ALDP, PPTD…VVGD, and APGK…VKAA. Residues 818–915 are disordered; that stretch reads GVSPDVWPQL…PKKKKDPVAV (98 aa). A phosphoserine mark is found at serine 863 and serine 867. Positions 885–894 are enriched in low complexity; it reads EPLSSPPQEA. 2 consecutive Fibronectin type-III domains span residues 918-1016 and 1023-1122; these read APYD…CEEW and PPHS…TRPG. A Phosphoserine modification is found at serine 1036. 3 Ig-like C2-type domains span residues 1114–1212, 1340–1426, and 1555–1644; these read PVVA…EEMK, PHFA…LKLV, and RVLG…FTVS.

As to quaternary structure, homodimer. Interacts with TTN/titin and PNKD. In terms of tissue distribution, ubiquitously expressed in all striated muscles. Expressed in all fiber types.

The protein localises to the cytoplasm. It localises to the myofibril. It is found in the sarcomere. Its subcellular location is the m line. May link the intermediate filament cytoskeleton to the M-disk of the myofibrils in striated muscle. May also contact myosin filaments. Also binds beta-integrins. The polypeptide is Myomesin-1 (Myom1) (Mus musculus (Mouse)).